We begin with the raw amino-acid sequence, 84 residues long: ATP synthase subunit c (84 aa).

The next 2 membrane-spanning stretches (helical) occupy residues 13 to 33 (IAVG…WGLI) and 56 to 76 (FIFA…GFWF).

Belongs to the ATPase C chain family. In terms of assembly, F-type ATPases have 2 components, F(1) - the catalytic core - and F(0) - the membrane proton channel. F(1) has five subunits: alpha(3), beta(3), gamma(1), delta(1), epsilon(1). F(0) has three main subunits: a(1), b(2) and c(10-14). The alpha and beta chains form an alternating ring which encloses part of the gamma chain. F(1) is attached to F(0) by a central stalk formed by the gamma and epsilon chains, while a peripheral stalk is formed by the delta and b chains.

It is found in the cell inner membrane. Functionally, f(1)F(0) ATP synthase produces ATP from ADP in the presence of a proton or sodium gradient. F-type ATPases consist of two structural domains, F(1) containing the extramembraneous catalytic core and F(0) containing the membrane proton channel, linked together by a central stalk and a peripheral stalk. During catalysis, ATP synthesis in the catalytic domain of F(1) is coupled via a rotary mechanism of the central stalk subunits to proton translocation. Its function is as follows. Key component of the F(0) channel; it plays a direct role in translocation across the membrane. A homomeric c-ring of between 10-14 subunits forms the central stalk rotor element with the F(1) delta and epsilon subunits. The sequence is that of ATP synthase subunit c from Acidithiobacillus ferrooxidans (strain ATCC 23270 / DSM 14882 / CIP 104768 / NCIMB 8455) (Ferrobacillus ferrooxidans (strain ATCC 23270)).